Here is a 428-residue protein sequence, read N- to C-terminus: Enolase (428 aa).

Position 163 (Gln163) interacts with (2R)-2-phosphoglycerate. Residue Glu205 is the Proton donor of the active site. Residues Asp242, Glu286, and Asp313 each coordinate Mg(2+). (2R)-2-phosphoglycerate contacts are provided by Lys338, Arg367, Ser368, and Lys389. Lys338 acts as the Proton acceptor in catalysis.

It belongs to the enolase family. It depends on Mg(2+) as a cofactor.

Its subcellular location is the cytoplasm. It localises to the secreted. It is found in the cell surface. It catalyses the reaction (2R)-2-phosphoglycerate = phosphoenolpyruvate + H2O. Its pathway is carbohydrate degradation; glycolysis; pyruvate from D-glyceraldehyde 3-phosphate: step 4/5. Catalyzes the reversible conversion of 2-phosphoglycerate (2-PG) into phosphoenolpyruvate (PEP). It is essential for the degradation of carbohydrates via glycolysis. The sequence is that of Enolase from Geobacter sulfurreducens (strain ATCC 51573 / DSM 12127 / PCA).